Reading from the N-terminus, the 516-residue chain is MRTKLPMDFPISKMPHLPSLPVSLSFLLFFLMLVRYWKNSKGQGKPPPGPRPLPILGNLHQLADGLPHHAVTKLCRKYGPVLKLKLGQLDVVVISSPEVAKEVLKTNEINFAQRPEVYAVEIMSYDHSSIVFSPYGDYWREMRKISVLELLSNRRVLSFRSIREDEVWNLVEFLSSSDERTINLSEKIFSMTNDIISRAAFGRKCNDQHNFTVLLEEIMKIGAGFAIADLYPSLTFLRPLTGVKPALMRIQNKMDKILEDIVTEHRIKRKAAANSNIKFEEEDLVDTLLNYAEANKDEFHLTLDQVKAVTLDIFSAGSETSATSMEWAMSELLKNPRVMKKAQEEVRQACKGKSKIREADIQKLDYLKLVIKETFRLHAPGPFTPRESRERCEIGGYTIPAKAKVLINLHAMGRDPTIWTDPDCFQPERFQGSSVDFKGNHFELIPFGGGRRICPGISFATANIELGLAQMLYHFDWKLPNGKKLEDLDMSENFGMTARRKENLQVIATTHIPFQK.

A helical transmembrane segment spans residues 14–34 (MPHLPSLPVSLSFLLFFLMLV). Cysteine 454 lines the heme pocket.

It belongs to the cytochrome P450 family. It depends on heme as a cofactor. In terms of tissue distribution, mainly expressed in roots and, to a lesser extent, in stems and old leaves.

It localises to the membrane. It catalyses the reaction dihydroniloticin + 2 reduced [NADPH--hemoprotein reductase] + 2 O2 = melianol + 2 oxidized [NADPH--hemoprotein reductase] + 3 H2O + 2 H(+). The protein operates within secondary metabolite biosynthesis; terpenoid biosynthesis. Functionally, monooxygenase involved in the biosynthesis of quassinoids triterpene natural products such as ailanthone, chaparrinone, glaucarubinone and amarolide, allelopathic degraded triterpene lactones inhibiting the growth of other plants, and possessing antimalarial, antifeedant, insecticidal, anti-inflammatory and anticancer activities. Catalyzes the conversion of dihydroniloticin to the protolimonoid melianol. The chain is Melianol synthase CYP71BQ17 from Ailanthus altissima (Tree-of-heaven).